The chain runs to 165 residues: NADPH-dependent 7-cyano-7-deazaguanine reductase (165 aa).

Residues 1–24 are disordered; it reads MTTRSTDQTEHLRALGQKTPYPAA. Cysteine 56 (thioimide intermediate) is an active-site residue. Residue aspartate 63 is the Proton donor of the active site. Residues 78-80 and 97-98 each bind substrate; these read VES and ME.

It belongs to the GTP cyclohydrolase I family. QueF type 1 subfamily.

It localises to the cytoplasm. The catalysed reaction is 7-aminomethyl-7-carbaguanine + 2 NADP(+) = 7-cyano-7-deazaguanine + 2 NADPH + 3 H(+). It functions in the pathway tRNA modification; tRNA-queuosine biosynthesis. In terms of biological role, catalyzes the NADPH-dependent reduction of 7-cyano-7-deazaguanine (preQ0) to 7-aminomethyl-7-deazaguanine (preQ1). The sequence is that of NADPH-dependent 7-cyano-7-deazaguanine reductase from Nitratidesulfovibrio vulgaris (strain ATCC 29579 / DSM 644 / CCUG 34227 / NCIMB 8303 / VKM B-1760 / Hildenborough) (Desulfovibrio vulgaris).